Reading from the N-terminus, the 455-residue chain is Probable galactarate/D-glucarate transporter GudP (455 aa).

The next 12 helical transmembrane spans lie at 19–39 (WFIVFMLFLVTSINYADRATL), 59–79 (YVFSAFGWAYVIGQLPGGWLL), 87–107 (IIALSIFFWSFFTLLQGAIGF), 108–128 (FSAGTAIILLFALRFLVGLSE), 153–173 (AFFNSAQYFAIVIFSPLMGWL), 177–197 (FGWHSVFVVMGIAGILLAVIW), 253–273 (IGVYIAQYCITTLTYFFLTWF), 289–309 (GFVASLPALCGFAGGVLGGIV), 320–340 (LTFARKVPIIAGMLLSCSMIV), 348–368 (WLVVVIMSLAFFGKGFGALGW), 386–406 (LFNTFGNIASITTPIIIGYIV), and 414–434 (GALVFVGANAIAAILSYLLLV).

Belongs to the major facilitator superfamily. Phthalate permease family.

The protein resides in the cell membrane. It catalyses the reaction galactarate(in) + H(+)(in) = galactarate(out) + H(+)(out). It carries out the reaction D-glucarate(in) + H(+)(in) = D-glucarate(out) + H(+)(out). Functionally, probably involved in the uptake of galactarate and/or D-glucarate. This is Probable galactarate/D-glucarate transporter GudP from Bacillus subtilis (strain 168).